Reading from the N-terminus, the 127-residue chain is MIFSVKSPILGFEHIKTMELIELDKFFVKLASKDDETSFTMINPFALRSYEFDIPSYYEELMDIKESSQLRIYNIIVVALPLEKSTVNFVAPIVCNMDNMTLSQVVLDVTKYPQYGQAEMIENFIQK.

It belongs to the FliW family. In terms of assembly, interacts with translational regulator CsrA and flagellin(s).

It is found in the cytoplasm. Functionally, acts as an anti-CsrA protein, binds CsrA and prevents it from repressing translation of its target genes, one of which is flagellin. Binds to flagellin and participates in the assembly of the flagellum. This is Flagellar assembly factor FliW from Campylobacter concisus (strain 13826).